The sequence spans 689 residues: Polyribonucleotide nucleotidyltransferase (689 aa).

Mg(2+)-binding residues include Asp-482 and Asp-488. One can recognise a KH domain in the interval 549–608 (PRMITLTIPQNKIGELIGPGGKNIRKIQEDNNVKIDIEETGRVFISGVESDGVKSAKEYV). The S1 motif domain maps to 618-686 (GKIYKSRVTK…KQGRINLSIK (69 aa)).

The protein belongs to the polyribonucleotide nucleotidyltransferase family. The cofactor is Mg(2+).

The protein localises to the cytoplasm. The catalysed reaction is RNA(n+1) + phosphate = RNA(n) + a ribonucleoside 5'-diphosphate. Functionally, involved in mRNA degradation. Catalyzes the phosphorolysis of single-stranded polyribonucleotides processively in the 3'- to 5'-direction. This Endomicrobium trichonymphae protein is Polyribonucleotide nucleotidyltransferase.